The following is a 199-amino-acid chain: MTTLTAQQIACVYAWLAQLFSRELDDEQLTQIASAQMAEWFSLLKSEPPLAAAVNELENCIATLTVRDDARLELAADFCGLFLMTDKQAALPYASAYKQDEQEIKRLLVEAGMETSGNFNEPADHLAIYLELLSHLHFSLGEGTVPARRIDSLRQKTLTALWQWLPEFAARCHQYDSFGFYAALSQLLLVLVECDHQNR.

It belongs to the TorD/DmsD family. TorD subfamily.

It is found in the cytoplasm. Functionally, involved in the biogenesis of TorA. Acts on TorA before the insertion of the molybdenum cofactor and, as a result, probably favors a conformation of the apoenzyme that is competent for acquiring the cofactor. The sequence is that of Chaperone protein TorD from Escherichia coli O8 (strain IAI1).